The primary structure comprises 445 residues: MKPVIALVGRPNVGKSTLFNRLTRSRDALVADLPGLTRDRHYGEGRVGERPYLVVDTGGFEPVAKDGILHQMARQTRQAVEEADVVVFIVDGRNGLAPQDKSIADYLRKTGRPIFLVVNKAEGMKYTAVATDFYELGLGDPRAISAAHGDGVTDMINEALEVAYAGQPEEADEDDPSRGIKIAIVGRPNVGKSTLVNALIGEDRVIAFDMPGTTRDSIYVDFERNGKKYTLIDTAGLRRRGKVFEAIEKFSVVKTLQSISDANVVILLLDAQQDISDQDAHIAGFVVEQGRALVIGVNKWDGLDDHARDRAKADLTRKLKFLDFAKSHYISAAKKTGIGALMRSVDDAYAAAMAKLPTPKLTRALIEAVEFQQPRRRGPVRPKLRYAHQGGQNPPLIVIHGNALDAVTETYKRYLENRFRETFSLTGTPLRIEFRSSNNPYADKG.

2 EngA-type G domains span residues 3 to 167 (PVIA…YAGQ) and 180 to 353 (IKIA…AAAM). GTP-binding positions include 9–16 (GRPNVGKS), 56–60 (DTGGF), 119–122 (NKAE), 186–193 (GRPNVGKS), 233–237 (DTAGL), and 298–301 (NKWD). One can recognise a KH-like domain in the interval 354-438 (AKLPTPKLTR…PLRIEFRSSN (85 aa)).

Belongs to the TRAFAC class TrmE-Era-EngA-EngB-Septin-like GTPase superfamily. EngA (Der) GTPase family. Associates with the 50S ribosomal subunit.

Its function is as follows. GTPase that plays an essential role in the late steps of ribosome biogenesis. The polypeptide is GTPase Der (Burkholderia ambifaria (strain ATCC BAA-244 / DSM 16087 / CCUG 44356 / LMG 19182 / AMMD) (Burkholderia cepacia (strain AMMD))).